Here is a 100-residue protein sequence, read N- to C-terminus: Apolipoprotein C-II (100 aa).

Residues 1–25 (MDARSLLLLWLLLPLLLLLGCEVQG) form the signal peptide. The lipid binding stretch occupies residues 65-73 (AVDETIRDI). Residues 77–100 (GSAAISTYTGILTDQILTMLQGKQ) are lipoprotein lipase cofactor.

This sequence belongs to the apolipoprotein C2 family. In terms of processing, proapolipoprotein C-II is synthesized as a sialic acid containing glycoprotein which is subsequently desialylated prior to its proteolytic processing. Post-translationally, proapolipoprotein C-II, the major form found in plasma undergoes proteolytic cleavage of its N-terminal hexapeptide to generate apolipoprotein C-II, which occurs as the minor form in plasma. In terms of tissue distribution, liver.

The protein resides in the secreted. Functionally, component of chylomicrons, very low-density lipoproteins (VLDL), low-density lipoproteins (LDL), and high-density lipoproteins (HDL) in plasma. Plays an important role in lipoprotein metabolism as an activator of lipoprotein lipase. Both proapolipoprotein C-II and apolipoprotein C-II can activate lipoprotein lipase. The protein is Apolipoprotein C-II (APOC2) of Cavia porcellus (Guinea pig).